The primary structure comprises 234 residues: MLFSPPLQRATLIQRYKRFLADVITPDGTALTLHCPNTGAMTGCATPGDTVWYSTSENTKRKYPHTWELTETQFGAFICVNTLRANQLTKEAIQENRLPALAGYNILKSEVKYGAERSRIDFMLQADFRPDCYIEVKSVTLAEKENGYFPDAITERGQKHLRELMGVAAAGHRAVVVFAVLHSAITRFSPARHIDIKYAQLLSEAQNKGVEVLAYKAELSAQKMELNEPVPITL.

Positions 201–220 (LLSEAQNKGVEVLAYKAELS) form a DNA-binding region, H-T-H motif.

The protein belongs to the SfsA family.

Binds to DNA non-specifically. Could be a regulatory factor involved in maltose metabolism. The sequence is that of Sugar fermentation stimulation protein A from Salmonella gallinarum (strain 287/91 / NCTC 13346).